The sequence spans 118 residues: Large ribosomal subunit protein bL19 (118 aa).

It belongs to the bacterial ribosomal protein bL19 family.

In terms of biological role, this protein is located at the 30S-50S ribosomal subunit interface and may play a role in the structure and function of the aminoacyl-tRNA binding site. The protein is Large ribosomal subunit protein bL19 of Saccharophagus degradans (strain 2-40 / ATCC 43961 / DSM 17024).